We begin with the raw amino-acid sequence, 903 residues long: Protein translocase subunit SecA (903 aa).

ATP-binding positions include Gln-87, 105–109 (GEGKT), and Asp-512. The tract at residues 853–903 (KQQQLSHYEENALVTEDPNAPATAERKVGRNDPCPCGSGKKYKQCHGRLQS) is disordered. 4 residues coordinate Zn(2+): Cys-886, Cys-888, Cys-897, and His-898. Residues 892–903 (KKYKQCHGRLQS) are compositionally biased toward basic residues.

Belongs to the SecA family. Monomer and homodimer. Part of the essential Sec protein translocation apparatus which comprises SecA, SecYEG and auxiliary proteins SecDF-YajC and YidC. It depends on Zn(2+) as a cofactor.

Its subcellular location is the cell inner membrane. The protein localises to the cytoplasm. It catalyses the reaction ATP + H2O + cellular proteinSide 1 = ADP + phosphate + cellular proteinSide 2.. Part of the Sec protein translocase complex. Interacts with the SecYEG preprotein conducting channel. Has a central role in coupling the hydrolysis of ATP to the transfer of proteins into and across the cell membrane, serving both as a receptor for the preprotein-SecB complex and as an ATP-driven molecular motor driving the stepwise translocation of polypeptide chains across the membrane. This is Protein translocase subunit SecA from Serratia proteamaculans (strain 568).